The following is a 147-amino-acid chain: Myosin-ID light chain (147 aa).

EF-hand domains follow at residues 8–43 (EAQS…LGQN), 79–114 (FDEK…LGER), and 115–147 (LPEE…MLKK). Positions 21, 23, 25, 27, and 32 each coordinate Ca(2+).

As to quaternary structure, myosin I is a dimer of a heavy and a light chain. Inability to self-assemble into filaments. Interacts with myoD. Does not interact with myoB or myoC.

It is found in the cytoplasm. Its function is as follows. Functions as the light chain for myosin-D. Has low affinity for calcium. The protein is Myosin-ID light chain (mlcD) of Dictyostelium discoideum (Social amoeba).